The following is a 564-amino-acid chain: Arginine--tRNA ligase (564 aa).

The 'HIGH' region motif lies at Ala-136–Asn-146.

The protein belongs to the class-I aminoacyl-tRNA synthetase family. Monomer.

Its subcellular location is the cytoplasm. It carries out the reaction tRNA(Arg) + L-arginine + ATP = L-arginyl-tRNA(Arg) + AMP + diphosphate. This Ruminiclostridium cellulolyticum (strain ATCC 35319 / DSM 5812 / JCM 6584 / H10) (Clostridium cellulolyticum) protein is Arginine--tRNA ligase.